The chain runs to 206 residues: Large ribosomal subunit protein uL4 (206 aa).

The interval 46–77 (GTRAQKDREQVRHSTKKPFKQKGTGRARAGMT) is disordered. A compositionally biased stretch (basic residues) spans 58-70 (HSTKKPFKQKGTG).

This sequence belongs to the universal ribosomal protein uL4 family. As to quaternary structure, part of the 50S ribosomal subunit.

Its function is as follows. One of the primary rRNA binding proteins, this protein initially binds near the 5'-end of the 23S rRNA. It is important during the early stages of 50S assembly. It makes multiple contacts with different domains of the 23S rRNA in the assembled 50S subunit and ribosome. Functionally, forms part of the polypeptide exit tunnel. In Polaromonas sp. (strain JS666 / ATCC BAA-500), this protein is Large ribosomal subunit protein uL4.